Consider the following 589-residue polypeptide: Class I diterpene synthase 2, chloroplastic (589 aa).

Mg(2+) contacts are provided by Asp328, Asp332, Asn472, Thr476, and Glu480. The DDXXD motif signature appears at 328–332 (DDFFD).

It belongs to the terpene synthase family. Requires Mg(2+) as cofactor. As to expression, mostly expressed in trichomes of leaves and fruits.

It is found in the plastid. Its subcellular location is the chloroplast. The catalysed reaction is 9alpha-copalyl diphosphate + H2O = (13S)-vitexifolin A + diphosphate. It carries out the reaction peregrinol diphosphate = (13R)-9,13-epoxylabd-14-ene + diphosphate. It catalyses the reaction peregrinol diphosphate + H2O = viteagnusin D + diphosphate. It participates in secondary metabolite biosynthesis; terpenoid biosynthesis. In terms of biological role, involved in the biosynthesis of labdane-type diterpenoid including cleroda-dienols, and peregrinol lactones and furan derivatives, dopaminergic diterpenoids that can bind to dopamine receptors in the human pituitary gland, have probably ability to lower prolactin levels, and are used to treat menstrual cycle disorders (e.g. premenstrual syndrome and mastodynia). Terpene synthase the catalyzes the conversion of peregrinol diphosphate to viteagnusin D and 9,13(R)-epoxy-labd-14-ene, and of syn-copalyl diphosophate to vitexifolin A. The protein is Class I diterpene synthase 2, chloroplastic of Vitex agnus-castus (Chaste tree).